The following is a 285-amino-acid chain: MEIGLREWLIVIGIVVIGGILFDGWRRMRGSKGKLKFKLERKIADAPEAVSENSELLGPSRSVDFPQGAGFEPDEENLPSLSVRGPSRRRLDDELDDLGLELDEPVHTAVAEPVSRLRAAEPKFESRRIEQPEHSEPRELPPIEEYLVIIVVSRDGAGFKGPALLQSILESGLRFGEKDIFHRHESLAGNGEVLFSMANALKPGTFDLDDIDHFSTRAVSFFLVLPGPRHPKQAFELMVAAARKLAQELNGELKDDQRSVMTAQTIEHYRQRIADFERRQLTHKR.

Residue Met1 is a topological domain, periplasmic. Residues 2 to 22 (EIGLREWLIVIGIVVIGGILF) form a helical membrane-spanning segment. Residues 23–285 (DGWRRMRGSK…FERRQLTHKR (263 aa)) lie on the Cytoplasmic side of the membrane. The interval 49 to 88 (AVSENSELLGPSRSVDFPQGAGFEPDEENLPSLSVRGPSR) is disordered.

Belongs to the ZipA family. In terms of assembly, interacts with FtsZ via their C-terminal domains.

Its subcellular location is the cell inner membrane. Its function is as follows. Essential cell division protein that stabilizes the FtsZ protofilaments by cross-linking them and that serves as a cytoplasmic membrane anchor for the Z ring. Also required for the recruitment to the septal ring of downstream cell division proteins. This chain is Cell division protein ZipA, found in Azotobacter vinelandii (strain DJ / ATCC BAA-1303).